Here is a 144-residue protein sequence, read N- to C-terminus: Transcriptional regulator MraZ (144 aa).

SpoVT-AbrB domains lie at 5 to 47 (TYTP…PRAE) and 77 to 120 (TDEQ…DAQA).

It belongs to the MraZ family. As to quaternary structure, forms oligomers.

It localises to the cytoplasm. Its subcellular location is the nucleoid. This is Transcriptional regulator MraZ from Mycolicibacterium vanbaalenii (strain DSM 7251 / JCM 13017 / BCRC 16820 / KCTC 9966 / NRRL B-24157 / PYR-1) (Mycobacterium vanbaalenii).